The following is a 355-amino-acid chain: UDP-N-acetylglucosamine--N-acetylmuramyl-(pentapeptide) pyrophosphoryl-undecaprenol N-acetylglucosamine transferase (355 aa).

Residues 11–13 (TGG), Asn-120, Arg-161, Ser-188, and Gln-280 each bind UDP-N-acetyl-alpha-D-glucosamine.

It belongs to the glycosyltransferase 28 family. MurG subfamily.

The protein resides in the cell inner membrane. The catalysed reaction is di-trans,octa-cis-undecaprenyl diphospho-N-acetyl-alpha-D-muramoyl-L-alanyl-D-glutamyl-meso-2,6-diaminopimeloyl-D-alanyl-D-alanine + UDP-N-acetyl-alpha-D-glucosamine = di-trans,octa-cis-undecaprenyl diphospho-[N-acetyl-alpha-D-glucosaminyl-(1-&gt;4)]-N-acetyl-alpha-D-muramoyl-L-alanyl-D-glutamyl-meso-2,6-diaminopimeloyl-D-alanyl-D-alanine + UDP + H(+). Its pathway is cell wall biogenesis; peptidoglycan biosynthesis. Its function is as follows. Cell wall formation. Catalyzes the transfer of a GlcNAc subunit on undecaprenyl-pyrophosphoryl-MurNAc-pentapeptide (lipid intermediate I) to form undecaprenyl-pyrophosphoryl-MurNAc-(pentapeptide)GlcNAc (lipid intermediate II). This chain is UDP-N-acetylglucosamine--N-acetylmuramyl-(pentapeptide) pyrophosphoryl-undecaprenol N-acetylglucosamine transferase, found in Prochlorococcus marinus (strain MIT 9211).